We begin with the raw amino-acid sequence, 231 residues long: Insertion sequence IS1162 putative ATP-binding protein (231 aa).

107–114 (GPTGVGKT) is a binding site for ATP.

This sequence belongs to the IS21/IS1162 putative ATP-binding protein family.

The sequence is that of Insertion sequence IS1162 putative ATP-binding protein from Pseudomonas fluorescens.